The sequence spans 245 residues: Ribosome maturation factor RimP (245 aa).

Belongs to the RimP family.

The protein resides in the cytoplasm. Functionally, required for maturation of 30S ribosomal subunits. In Verminephrobacter eiseniae (strain EF01-2), this protein is Ribosome maturation factor RimP.